The sequence spans 384 residues: MEAKDHIERRPDRVSIRRLKLVNFRNYAELSLPLGPGHVVLTGENGSGKTNLIEAISFLSPGRGLRRAAYDDVARANAEGGFAIHAALDCMIYGDAEIGTGTAGGGEGGRKVRINRIAASADDLLDYARILWVVPSMDGLFTGGASDRRRFLDRMVLAIDTAHGKRVLDYEKAMRSRNRLLNDGSNDDQWLDAIENQMAELGTAIAAARAQAMRLIAAMIERLPAEGPFPKADCFLEGALESRIGVEAALDLEEDFRRTLRDGRARDRAAGRTLDGPHRTDLIVQHRPKSMPAALCSTGEQKALLIGLILAHARLTAELSGMAPILLLDEIAAHLDMGRRAALFGILDELGGQAFMTGTDRALFDALAGDAQFFNVSAGQLTGI.

Residue 43–50 participates in ATP binding; that stretch reads GENGSGKT.

It belongs to the RecF family.

It localises to the cytoplasm. Functionally, the RecF protein is involved in DNA metabolism; it is required for DNA replication and normal SOS inducibility. RecF binds preferentially to single-stranded, linear DNA. It also seems to bind ATP. The protein is DNA replication and repair protein RecF of Brucella abortus (strain 2308).